The following is a 305-amino-acid chain: Glycine--tRNA ligase alpha subunit (305 aa).

It belongs to the class-II aminoacyl-tRNA synthetase family. Tetramer of two alpha and two beta subunits.

The protein localises to the cytoplasm. The enzyme catalyses tRNA(Gly) + glycine + ATP = glycyl-tRNA(Gly) + AMP + diphosphate. The polypeptide is Glycine--tRNA ligase alpha subunit (Streptococcus pyogenes serotype M18 (strain MGAS8232)).